Consider the following 95-residue polypeptide: UPF0235 protein Adeh_1087 (95 aa).

The protein belongs to the UPF0235 family.

This Anaeromyxobacter dehalogenans (strain 2CP-C) protein is UPF0235 protein Adeh_1087.